We begin with the raw amino-acid sequence, 125 residues long: Small ribosomal subunit protein uS13 (125 aa).

Belongs to the universal ribosomal protein uS13 family. As to quaternary structure, part of the 30S ribosomal subunit. Forms a loose heterodimer with protein S19. Forms two bridges to the 50S subunit in the 70S ribosome.

Located at the top of the head of the 30S subunit, it contacts several helices of the 16S rRNA. In the 70S ribosome it contacts the 23S rRNA (bridge B1a) and protein L5 of the 50S subunit (bridge B1b), connecting the 2 subunits; these bridges are implicated in subunit movement. Contacts the tRNAs in the A and P-sites. The protein is Small ribosomal subunit protein uS13 of Orientia tsutsugamushi (strain Boryong) (Rickettsia tsutsugamushi).